Reading from the N-terminus, the 396-residue chain is Actin-related protein 6 (396 aa).

The residue at position 2 (T2) is an N-acetylthreonine. Position 260 is an N6-acetyllysine (K260).

It belongs to the actin family. ARP6 subfamily. As to quaternary structure, component of the chromatin-remodeling SRCAP complex composed of at least SRCAP, DMAP1, RUVBL1, RUVBL2, ACTL6A, YEATS4, ACTR6 and ZNHIT1. Interacts with CBX1, CBX3 and CBX5.

It is found in the cytoplasm. It localises to the cytoskeleton. The protein localises to the nucleus. The protein resides in the nucleolus. Required for formation and/or maintenance of proper nucleolar structure and function. Plays a dual role in the regulation of ribosomal DNA (rDNA) transcription. In the presence of high glucose, maintains active rDNA transcription through H2A.Z deposition and under glucose starvation, is required for the repression of rDNA transcription, and this function may be independent of H2A.Z. The sequence is that of Actin-related protein 6 (ACTR6) from Homo sapiens (Human).